Reading from the N-terminus, the 428-residue chain is Serine--tRNA ligase (428 aa).

Residue 235–237 (TAE) coordinates L-serine. 266–268 (RSE) serves as a coordination point for ATP. Glu-289 provides a ligand contact to L-serine. 353 to 356 (EISS) contacts ATP. L-serine is bound at residue Ser-389.

The protein belongs to the class-II aminoacyl-tRNA synthetase family. Type-1 seryl-tRNA synthetase subfamily. As to quaternary structure, homodimer. The tRNA molecule binds across the dimer.

The protein resides in the cytoplasm. It catalyses the reaction tRNA(Ser) + L-serine + ATP = L-seryl-tRNA(Ser) + AMP + diphosphate + H(+). The catalysed reaction is tRNA(Sec) + L-serine + ATP = L-seryl-tRNA(Sec) + AMP + diphosphate + H(+). It functions in the pathway aminoacyl-tRNA biosynthesis; selenocysteinyl-tRNA(Sec) biosynthesis; L-seryl-tRNA(Sec) from L-serine and tRNA(Sec): step 1/1. In terms of biological role, catalyzes the attachment of serine to tRNA(Ser). Is also able to aminoacylate tRNA(Sec) with serine, to form the misacylated tRNA L-seryl-tRNA(Sec), which will be further converted into selenocysteinyl-tRNA(Sec). The polypeptide is Serine--tRNA ligase (Shewanella halifaxensis (strain HAW-EB4)).